The chain runs to 462 residues: Glycine--tRNA ligase (462 aa).

R100 and E174 together coordinate substrate. ATP contacts are provided by residues 206 to 208, 216 to 221, 290 to 291, and 334 to 337; these read RNE, FRTREF, EL, and GVDR. 221 to 225 provides a ligand contact to substrate; that stretch reads FEQME. 330–334 contacts substrate; that stretch reads EPSVG.

Belongs to the class-II aminoacyl-tRNA synthetase family. In terms of assembly, homodimer.

It is found in the cytoplasm. The enzyme catalyses tRNA(Gly) + glycine + ATP = glycyl-tRNA(Gly) + AMP + diphosphate. In terms of biological role, catalyzes the attachment of glycine to tRNA(Gly). In Alkaliphilus oremlandii (strain OhILAs) (Clostridium oremlandii (strain OhILAs)), this protein is Glycine--tRNA ligase.